The chain runs to 679 residues: MIDQYKHQQLRIGSVSPQQIRAWAKKILPNGEIVGEVTKPYTFHYKTNKPEKDGLFCERISGPIKSGICACGNYRGIGTEKEDPKFCEECGVEFVDSRIRRYQMGYIKLTCPVTHVWYLKRLPSYIANLLDKPLRELEGLVYCDFSFARSIAKKPTFLRLRGSFEYEIQSWQYSIPLFFTTQGFETFRNREISTGAGAIREQLADSDLRIITDNSLLEWKELGDEESAGNEWEEKKIRRRKDFLVRRIELAKHFLRTNVDPEWMVLCLLPVLPPELRPIIQIDGGKLMSSDINELYRRVIYRNNTLTDLLATSRSTPGELVMCQEKLVQEAVDTLFDNGIRGQPMRDGHNKVYKSFSDVIEGKEGRFRETLLGKRVDYSGRSVIVVGPLLSLHQCGLPREIAIELFQAFVIRGLIRQDVASNTGIAKSKIREKEPIVWEILQEVMQGHPVLLNRAPTLHRLGIQAFQPILVEGRAICLHPLVCKGFNADFDGDQMAVHVPLSLEAQAEARLLMFSHMNLLSPAIGDPVSVPTQDMLIGLYVLTIGNPRGICANRYNQSNSNCRNYKKEKVYKNDFKYTKELYFSSSYDALGAYRQKRIHLDSPLWLRWRLDQRVVGSREVPIEIQYESFGNYNEIYKHYQIIGSVKIEICCIYIRTTAGHISFYREIEEAIQGFWRAYS.

The Zn(2+) site is built by Cys-69, Cys-71, Cys-87, and Cys-90. Mg(2+) is bound by residues Asp-489, Asp-491, and Asp-493.

Belongs to the RNA polymerase beta' chain family. RpoC1 subfamily. In terms of assembly, in plastids the minimal PEP RNA polymerase catalytic core is composed of four subunits: alpha, beta, beta', and beta''. When a (nuclear-encoded) sigma factor is associated with the core the holoenzyme is formed, which can initiate transcription. Mg(2+) is required as a cofactor. Zn(2+) serves as cofactor.

Its subcellular location is the plastid. The protein localises to the chloroplast. It carries out the reaction RNA(n) + a ribonucleoside 5'-triphosphate = RNA(n+1) + diphosphate. Functionally, DNA-dependent RNA polymerase catalyzes the transcription of DNA into RNA using the four ribonucleoside triphosphates as substrates. The chain is DNA-directed RNA polymerase subunit beta' from Phalaenopsis aphrodite subsp. formosana (Moth orchid).